Reading from the N-terminus, the 471-residue chain is Histidinol dehydrogenase (471 aa).

NAD(+)-binding residues include Tyr-139, Gln-204, and Asn-236. Substrate-binding residues include Thr-259, Gln-281, and His-284. The Zn(2+) site is built by Gln-281 and His-284. Active-site proton acceptor residues include Glu-350 and His-351. Residues His-351, Asp-384, Glu-438, and His-443 each coordinate substrate. Residue Asp-384 coordinates Zn(2+). Zn(2+) is bound at residue His-443.

It belongs to the histidinol dehydrogenase family. It depends on Zn(2+) as a cofactor.

It carries out the reaction L-histidinol + 2 NAD(+) + H2O = L-histidine + 2 NADH + 3 H(+). Its pathway is amino-acid biosynthesis; L-histidine biosynthesis; L-histidine from 5-phospho-alpha-D-ribose 1-diphosphate: step 9/9. Functionally, catalyzes the sequential NAD-dependent oxidations of L-histidinol to L-histidinaldehyde and then to L-histidine. The sequence is that of Histidinol dehydrogenase from Bifidobacterium longum (strain NCC 2705).